Consider the following 150-residue polypeptide: Thyroid hormone-inducible hepatic protein (150 aa).

The disordered stretch occupies residues 83 to 104 (KVAGNETSEAENDAAETEEAEE). A Phosphoserine modification is found at Ser-90. The span at 90 to 104 (SEAENDAAETEEAEE) shows a compositional bias: acidic residues.

This sequence belongs to the SPOT14 family. In terms of assembly, homodimer. Heterodimer with MID1IP1. Interacts with THRB and PLAGL1. Mainly expressed in tissues that synthesize triglycerides.

It is found in the nucleus. It localises to the cytoplasm. Plays a role in the regulation of lipogenesis, especially in lactating mammary gland. Important for the biosynthesis of triglycerides with medium-length fatty acid chains. May modulate lipogenesis by interacting with MID1IP1 and preventing its interaction with ACACA. May function as transcriptional coactivator. May modulate the transcription factor activity of THRB. The sequence is that of Thyroid hormone-inducible hepatic protein (Thrsp) from Mus musculus (Mouse).